The following is a 116-amino-acid chain: Protein Wnt-5(I) (116 aa).

Ser1 carries O-palmitoleoyl serine; by PORCN lipidation. The N-linked (GlcNAc...) asparagine glycan is linked to Asn69. Cys82 and Cys97 are joined by a disulfide.

Belongs to the Wnt family. Palmitoleoylation is required for efficient binding to frizzled receptors. Depalmitoleoylation leads to Wnt signaling pathway inhibition.

The protein localises to the secreted. It localises to the extracellular space. It is found in the extracellular matrix. In terms of biological role, ligand for members of the frizzled family of seven transmembrane receptors. Probable developmental protein. May be a signaling molecule which affects the development of discrete regions of tissues. Is likely to signal over only few cell diameters. The protein is Protein Wnt-5(I) (WNT-5(I)) of Eptatretus stoutii (Pacific hagfish).